Here is a 215-residue protein sequence, read N- to C-terminus: Oligoribonuclease (215 aa).

Positions 5–170 (LVWIDCEMTG…ADIHESIREL (166 aa)) constitute an Exonuclease domain. Tyrosine 127 is a catalytic residue.

Belongs to the oligoribonuclease family.

It localises to the cytoplasm. Functionally, 3'-to-5' exoribonuclease specific for small oligoribonucleotides. The sequence is that of Oligoribonuclease from Mycobacterium leprae (strain TN).